The primary structure comprises 444 residues: 23S rRNA (uracil(1939)-C(5))-methyltransferase RlmD (444 aa).

The TRAM domain maps to 5–67 (RNRFDRTPFQ…RHFDEAKTVE (63 aa)). Residues Cys-80, Cys-86, Cys-89, and Cys-168 each contribute to the [4Fe-4S] cluster site. S-adenosyl-L-methionine-binding residues include Gln-276, Phe-305, Asn-310, Glu-326, Asp-353, and Asp-374. The active-site Nucleophile is Cys-400.

It belongs to the class I-like SAM-binding methyltransferase superfamily. RNA M5U methyltransferase family. RlmD subfamily.

It carries out the reaction uridine(1939) in 23S rRNA + S-adenosyl-L-methionine = 5-methyluridine(1939) in 23S rRNA + S-adenosyl-L-homocysteine + H(+). Its function is as follows. Catalyzes the formation of 5-methyl-uridine at position 1939 (m5U1939) in 23S rRNA. This Xanthomonas oryzae pv. oryzae (strain KACC10331 / KXO85) protein is 23S rRNA (uracil(1939)-C(5))-methyltransferase RlmD.